A 112-amino-acid chain; its full sequence is Tyrosine-protein phosphatase 8 (112 aa).

The 112-residue stretch at 1–112 (ENSTAIVMIT…ANSEYGPVVV (112 aa)) folds into the Tyrosine-protein phosphatase domain.

This sequence belongs to the protein-tyrosine phosphatase family.

The catalysed reaction is O-phospho-L-tyrosyl-[protein] + H2O = L-tyrosyl-[protein] + phosphate. The chain is Tyrosine-protein phosphatase 8 (STY-8) from Styela plicata (Wrinkled sea squirt).